We begin with the raw amino-acid sequence, 155 residues long: SsrA-binding protein (155 aa).

It belongs to the SmpB family.

It is found in the cytoplasm. Functionally, required for rescue of stalled ribosomes mediated by trans-translation. Binds to transfer-messenger RNA (tmRNA), required for stable association of tmRNA with ribosomes. tmRNA and SmpB together mimic tRNA shape, replacing the anticodon stem-loop with SmpB. tmRNA is encoded by the ssrA gene; the 2 termini fold to resemble tRNA(Ala) and it encodes a 'tag peptide', a short internal open reading frame. During trans-translation Ala-aminoacylated tmRNA acts like a tRNA, entering the A-site of stalled ribosomes, displacing the stalled mRNA. The ribosome then switches to translate the ORF on the tmRNA; the nascent peptide is terminated with the 'tag peptide' encoded by the tmRNA and targeted for degradation. The ribosome is freed to recommence translation, which seems to be the essential function of trans-translation. This chain is SsrA-binding protein, found in Geobacillus thermodenitrificans (strain NG80-2).